The sequence spans 308 residues: Zinc transporter ZIP9 (308 aa).

Residues 4 to 24 traverse the membrane as a helical segment; the sequence is FLSISLLSVAMLVGCYVAGII. Asn29 carries an N-linked (GlcNAc...) asparagine glycan. Helical transmembrane passes span 35-55, 107-127, 147-167, 177-197, and 211-231; these read LKLV…AVIV, AYIG…DQIG, ITTT…LGAA, LIVF…LVSF, and HLLV…LGLS. Asn242 is a glycosylation site (N-linked (GlcNAc...) asparagine). The next 2 membrane-spanning stretches (helical) occupy residues 245-265 and 287-307; these read GVAM…HVLP and LEVA…IGHQ.

Belongs to the ZIP transporter (TC 2.A.5) family.

It localises to the golgi apparatus. It is found in the trans-Golgi network membrane. Its subcellular location is the cell membrane. The protein resides in the cytoplasm. The protein localises to the perinuclear region. It localises to the mitochondrion. It is found in the nucleus. The catalysed reaction is Zn(2+)(in) = Zn(2+)(out). Its function is as follows. Transports zinc ions across cell and organelle membranes into the cytoplasm and regulates intracellular zinc homeostasis. Participates in the zinc ions efflux out of the secretory compartments. Regulates intracellular zinc level, resulting in the enhancement of AKT1 and MAPK3/MAPK1 (Erk1/2) phosphorylation in response to the BCR activation. Also functions as a membrane androgen receptor that mediates, through a G protein, the non-classical androgen signaling pathway, characterized by the activation of MAPK3/MAPK1 (Erk1/2) and transcription factors CREB1 or ATF1. This pathway contributes to CLDN1 and CLDN5 expression and tight junction formation between adjacent Sertoli cells. Mediates androgen-induced vascular endothelial cell proliferation through activation of an inhibitory G protein leading to the AKT1 and MAPK3/MAPK1 (Erk1/2) activation which in turn modulate inhibition (phosphorylation) of GSK3B and CCND1 transcription. Moreover, has dual functions as a membrane-bound androgen receptor and as an androgen-dependent zinc transporter both of which are mediated through an inhibitory G protein (Gi) that mediates both MAP kinase and zinc signaling leading to the androgen-dependent apoptotic process. In Mus musculus (Mouse), this protein is Zinc transporter ZIP9.